A 29-amino-acid polypeptide reads, in one-letter code: Cytochrome b6-f complex subunit 8 (29 aa).

A helical transmembrane segment spans residues 3–23; the sequence is IVSIGWAALMVVFTFSLSLVV.

The protein belongs to the PetN family. As to quaternary structure, the 4 large subunits of the cytochrome b6-f complex are cytochrome b6, subunit IV (17 kDa polypeptide, PetD), cytochrome f and the Rieske protein, while the 4 small subunits are PetG, PetL, PetM and PetN. The complex functions as a dimer.

The protein resides in the plastid. It is found in the chloroplast thylakoid membrane. In terms of biological role, component of the cytochrome b6-f complex, which mediates electron transfer between photosystem II (PSII) and photosystem I (PSI), cyclic electron flow around PSI, and state transitions. In Zygnema circumcarinatum (Green alga), this protein is Cytochrome b6-f complex subunit 8.